The chain runs to 481 residues: p-aminobenzoyl-glutamate hydrolase subunit B (481 aa).

As to quaternary structure, forms a heterodimer with AbgA. Mn(2+) serves as cofactor.

Functionally, component of the p-aminobenzoyl-glutamate hydrolase multicomponent enzyme system which catalyzes the cleavage of p-aminobenzoyl-glutamate (PABA-GLU) to form p-aminobenzoate (PABA) and glutamate. AbgAB does not degrade dipeptides and the physiological role of abgABT should be clarified. The polypeptide is p-aminobenzoyl-glutamate hydrolase subunit B (abgB) (Escherichia coli (strain K12)).